The following is a 192-amino-acid chain: Protein FAM169BP (192 aa).

Residues 121 to 192 (YQAHPGNSED…PPGKLTRSSP (72 aa)) are disordered. Acidic residues predominate over residues 159–177 (EELEDTKDDPECGVEEEDA).

This sequence belongs to the FAM169 family.

The chain is Protein FAM169BP from Homo sapiens (Human).